The chain runs to 243 residues: Transmembrane protein 174 (243 aa).

2 helical membrane-spanning segments follow: residues 40–60 and 73–93; these read LLFS…MGWI and LLGP…VCKF.

As to quaternary structure, interacts with SLC34A1; regulates SLC34A1 internalization by PTH and FGF23. Predominantly expressed in kidney. Selectively localized in the apical membrane of renal proximal tubule epithelial cells.

It localises to the endoplasmic reticulum membrane. Its subcellular location is the apical cell membrane. Regulator of plasma phosphate homeostasis. Decreases serum inorganic phosphate (Pi) uptake by regulating the sodium-phosphate cotransporter SLC34A1 trafficking by PTH and FGF23 in the kidney. This Homo sapiens (Human) protein is Transmembrane protein 174 (TMEM174).